The chain runs to 109 residues: Nucleoid-associated protein BUsg_467 (109 aa).

It belongs to the YbaB/EbfC family. Homodimer.

The protein resides in the cytoplasm. It localises to the nucleoid. Binds to DNA and alters its conformation. May be involved in regulation of gene expression, nucleoid organization and DNA protection. This is Nucleoid-associated protein BUsg_467 from Buchnera aphidicola subsp. Schizaphis graminum (strain Sg).